The following is a 919-amino-acid chain: Puromycin-sensitive aminopeptidase (919 aa).

Residues Glu-180 and 316–320 contribute to the substrate site; that span reads GAMEN. Position 352 (His-352) interacts with Zn(2+). Glu-353 acts as the Proton acceptor in catalysis. Zn(2+) is bound by residues His-356 and Glu-375. A 3'-nitrotyrosine modification is found at Tyr-464. A Nuclear localization signal motif is present at residues 726–730; it reads RRRFK.

It belongs to the peptidase M1 family. In terms of assembly, monomer. Zn(2+) is required as a cofactor. In terms of tissue distribution, detected in liver, epithelium of renal tubules, epithelium of small and large intestine, gastric epithelial cells, and alveoli of the lung (at protein level).

It is found in the cytoplasm. The protein localises to the cytosol. The protein resides in the nucleus. It carries out the reaction Release of an N-terminal amino acid, preferentially alanine, from a wide range of peptides, amides and arylamides.. With respect to regulation, strongly inhibited by bestatin, leuhistin, actinonin, amastatin, 1,10-phenanthroline, DFP, PCMBS, Zn(2+), Cd(2+), Co(2+), Cu(2+), Hg(2+), EDTA and puromycin. Not inhibited by PMSF, and only slightly inhibited by leupeptin and aprotinin. Activity is increased by Mg(2+) and Ca(2+). Aminopeptidase with broad substrate specificity for several peptides. Involved in proteolytic events essential for cell growth and viability. May act as regulator of neuropeptide activity. Plays a role in the antigen-processing pathway for MHC class I molecules. Involved in the N-terminal trimming of cytotoxic T-cell epitope precursors. Digests the poly-Q peptides found in many cellular proteins. Digests tau from normal brain more efficiently than tau from Alzheimer disease brain. The protein is Puromycin-sensitive aminopeptidase (NPEPPS) of Homo sapiens (Human).